The following is a 686-amino-acid chain: Cyclic nucleotide-gated channel alpha-1 (686 aa).

Residues 1–165 (MKNNIINTQQ…PSGNTYYNWL (165 aa)) are Cytoplasmic-facing. Disordered stretches follow at residues 31–75 (ENGA…PSQR) and 87–149 (NVNN…EEKK). The segment covering 39–53 (SEDDDSASTSEESEN) has biased composition (acidic residues). Residues 110–124 (SKSDDKNENKNDPEK) show a composition bias toward basic and acidic residues. Over residues 125-134 (KKKKKDKEKK) the composition is skewed to basic residues. The segment covering 135–149 (KKEEKSKDKKEEEKK) has biased composition (basic and acidic residues). The chain crosses the membrane as a helical span at residues 166 to 187 (FCITLPVMYNWTMVIARACFDE). Residues 188–197 (LQSDYLEYWL) lie on the Extracellular side of the membrane. Residues 198–218 (ILDYVSDIVYLIDMFVRTRTG) traverse the membrane as a helical segment. The Cytoplasmic portion of the chain corresponds to 219–243 (YLEQGLLVKEELKLINKYKSNLQFK). The helical transmembrane segment at 244–262 (LDVLSLIPTDLLYFKLGWN) threads the bilayer. At 263–267 (YPEIR) the chain is on the extracellular side. The chain crosses the membrane as a helical span at residues 268–286 (LNRLLRFSRMFEFFQRTET). The Cytoplasmic portion of the chain corresponds to 287–293 (RTNYPNI). Residues 291 to 399 (PNIFRISNLV…GNIGSMISNM (109 aa)) are ion conduction pathway. A helical transmembrane segment spans residues 294–317 (FRISNLVMYIVIIIHWNACVFYSI). Over 318-340 (SKAIGFGNDTWVYPDINDPEFGR) the chain is Extracellular. N325 carries N-linked (GlcNAc...) asparagine glycosylation. A run of 2 helical transmembrane segments spans residues 341–375 (LARK…VFVV) and 376–400 (VDFL…SNMN). The tract at residues 358 to 361 (TIGE) is selectivity filter. Residues 401–477 (AARAEFQARI…DTLKKVRIFA (77 aa)) are C-linker. The Cytoplasmic portion of the chain corresponds to 401 to 686 (AARAEFQARI…GAESGPIDST (286 aa)). Residues 481–601 (AGLLVELVLK…EEKGKQILMK (121 aa)) are cyclic nucleotide-binding domain. Positions 541, 544, 557, and 558 each coordinate 3',5'-cyclic GMP. 2 residues coordinate 3',5'-cyclic AMP: R557 and T558. Residues 619-673 (LEEKVTRMEGSVDLLQTRFARILAEYESMQQKLKQRLTKVEKFLKPLIDTEFSSI) adopt a coiled-coil conformation.

It belongs to the cyclic nucleotide-gated cation channel (TC 1.A.1.5) family. CNGA1 subfamily. As to quaternary structure, forms heterotetrameric channels composed of CNGA1 and CNGB1 subunits with 3:1 stoichiometry. May also form cyclic nucleotide-activated homotetrameric channels, that are efficiently activated by saturating cGMP, but poorly activated by saturating cAMP compared to the heterotetramer with CNGB1. The channel binds Ca(2+)-bound CALM1 via CaM1 and CaM2 regions of the CNGB1 subunit; this interaction modulates the affinity of the channel for cNMPs in response to intracellular Ca(2+) levels. As to expression, rod cells in the retina.

The protein resides in the cell membrane. It carries out the reaction Ca(2+)(in) = Ca(2+)(out). The catalysed reaction is Na(+)(in) = Na(+)(out). The enzyme catalyses K(+)(in) = K(+)(out). It catalyses the reaction NH4(+)(in) = NH4(+)(out). It carries out the reaction Rb(+)(in) = Rb(+)(out). The catalysed reaction is Li(+)(in) = Li(+)(out). The enzyme catalyses Cs(+)(in) = Cs(+)(out). With respect to regulation, channel opening is activated by cGMP and at a much lesser extent by cAMP. Ca(2+) binding concominantly blocks monovalent cation currents. Inhibited by L-cis-diltiazem. Functionally, pore-forming subunit of the rod cyclic nucleotide-gated channel. Mediates rod photoresponses at dim light converting transient changes in intracellular cGMP levels into electrical signals. In the dark, cGMP levels are high and keep the channel open enabling a steady inward current carried by Na(+) and Ca(2+) ions that leads to membrane depolarization and neurotransmitter release from synaptic terminals. Upon photon absorption cGMP levels decline leading to channel closure and membrane hyperpolarization that ultimately slows neurotransmitter release and signals the presence of light, the end point of the phototransduction cascade. Conducts cGMP- and cAMP-gated ion currents, with permeability for monovalent and divalent cations. The selectivity for Ca(2+) over Na(+) increases with cGMP concentrations, whereas the selectivity among monovalent ions is independent of the cGMP levels. In Homo sapiens (Human), this protein is Cyclic nucleotide-gated channel alpha-1.